The chain runs to 472 residues: MVKIGLEVHVHLTSLKTKLFCSCPTEYVGKDPNTITCPVCLGLPGAIPVLNENAVRAAIMVALAINAEIADRVVMVRKHYFYPDMAKNYQISQYDGPGSIAISKGGFIKLRDNKTIRIRRINIEEDPAKIVYPTGSMLTSRYTLLDYNRSGFPLLEIVTEPDMSDPREAREFLEKLRSILEHLGISNPDLEGAMRADANISIEGGERVEIKNIGSPKEVEEALKYEIARQKALVAQGMKVNRETRHWDNAKKVTVLTRSKELEEDYRYFPDPDLPPYTVSFDMIEKIRKELPELPDIRIQRLVKEYGITEYDANVLVIDKSLADLFEETAKNYKNYKKLVNILINDYLRWLNDKNLKPSQSKATTKHLIELLTLLDNGTITIKIAKEILPQIVIEGKMPSEIIKQNSLIAIKDEDYLINVIKEVLSEEKDAVEKAKRDPKVINYLVGKVMKKTSKRADPYIVNELIKKELGI.

Belongs to the GatB/GatE family. GatB subfamily. In terms of assembly, heterotrimer of A, B and C subunits.

It carries out the reaction L-glutamyl-tRNA(Gln) + L-glutamine + ATP + H2O = L-glutaminyl-tRNA(Gln) + L-glutamate + ADP + phosphate + H(+). The catalysed reaction is L-aspartyl-tRNA(Asn) + L-glutamine + ATP + H2O = L-asparaginyl-tRNA(Asn) + L-glutamate + ADP + phosphate + 2 H(+). In terms of biological role, allows the formation of correctly charged Asn-tRNA(Asn) or Gln-tRNA(Gln) through the transamidation of misacylated Asp-tRNA(Asn) or Glu-tRNA(Gln) in organisms which lack either or both of asparaginyl-tRNA or glutaminyl-tRNA synthetases. The reaction takes place in the presence of glutamine and ATP through an activated phospho-Asp-tRNA(Asn) or phospho-Glu-tRNA(Gln). The sequence is that of Aspartyl/glutamyl-tRNA(Asn/Gln) amidotransferase subunit B from Sulfolobus acidocaldarius (strain ATCC 33909 / DSM 639 / JCM 8929 / NBRC 15157 / NCIMB 11770).